A 392-amino-acid chain; its full sequence is Formate-dependent phosphoribosylglycinamide formyltransferase (392 aa).

N(1)-(5-phospho-beta-D-ribosyl)glycinamide is bound by residues 20–21 (EL) and Glu80. ATP contacts are provided by residues Arg112, Lys153, 158-163 (SSGKGQ), 193-196 (EGFV), and Glu201. The ATP-grasp domain occupies 117–306 (RLAAETLGLP…EFALHVRAIL (190 aa)). Mg(2+) is bound by residues Glu265 and Glu277. N(1)-(5-phospho-beta-D-ribosyl)glycinamide-binding positions include Asp284, Lys355, and 362–363 (RR).

This sequence belongs to the PurK/PurT family. In terms of assembly, homodimer.

It catalyses the reaction N(1)-(5-phospho-beta-D-ribosyl)glycinamide + formate + ATP = N(2)-formyl-N(1)-(5-phospho-beta-D-ribosyl)glycinamide + ADP + phosphate + H(+). It participates in purine metabolism; IMP biosynthesis via de novo pathway; N(2)-formyl-N(1)-(5-phospho-D-ribosyl)glycinamide from N(1)-(5-phospho-D-ribosyl)glycinamide (formate route): step 1/1. In terms of biological role, involved in the de novo purine biosynthesis. Catalyzes the transfer of formate to 5-phospho-ribosyl-glycinamide (GAR), producing 5-phospho-ribosyl-N-formylglycinamide (FGAR). Formate is provided by PurU via hydrolysis of 10-formyl-tetrahydrofolate. This chain is Formate-dependent phosphoribosylglycinamide formyltransferase, found in Aeromonas hydrophila subsp. hydrophila (strain ATCC 7966 / DSM 30187 / BCRC 13018 / CCUG 14551 / JCM 1027 / KCTC 2358 / NCIMB 9240 / NCTC 8049).